Here is a 498-residue protein sequence, read N- to C-terminus: ATP synthase subunit beta, chloroplastic (498 aa).

An ATP-binding site is contributed by 172-179; it reads GGAGVGKT.

The protein belongs to the ATPase alpha/beta chains family. In terms of assembly, F-type ATPases have 2 components, CF(1) - the catalytic core - and CF(0) - the membrane proton channel. CF(1) has five subunits: alpha(3), beta(3), gamma(1), delta(1), epsilon(1). CF(0) has four main subunits: a(1), b(1), b'(1) and c(9-12).

It is found in the plastid. The protein localises to the chloroplast thylakoid membrane. The catalysed reaction is ATP + H2O + 4 H(+)(in) = ADP + phosphate + 5 H(+)(out). Its function is as follows. Produces ATP from ADP in the presence of a proton gradient across the membrane. The catalytic sites are hosted primarily by the beta subunits. In Nymphaea alba (White water-lily), this protein is ATP synthase subunit beta, chloroplastic.